We begin with the raw amino-acid sequence, 309 residues long: MSIRIIPQDELGSSEKRTAEAIPPLLFPRLKNLYNRRAERLRELAANNPLGDYLRFAALIAHAQEVVLYDHPLQMDLTARIKAASEQGKPPLDIHVLPRDKHWHKLLHSLIAELKPEMSGPALAVIENLEKASEQELEQMASALFVSDFASVSSDKAPFIWAALSLYWAQMASLIPGKARAEYGEQRQFCPVCGSMPVSSIVQIGTTQGLRYLHCNLCETEWHVVRVKCSNCEQSRDLHYWSLDNEQAAVKAESCGDCGTYLKIMYQEKDPKVEAVADDLASLVLDARMEQEGFARSSINPFMFPGEGE.

Belongs to the FdhE family.

It is found in the cytoplasm. Its function is as follows. Necessary for formate dehydrogenase activity. The polypeptide is Protein FdhE homolog (Klebsiella pneumoniae (strain 342)).